We begin with the raw amino-acid sequence, 194 residues long: Probable GTP-binding protein EngB (194 aa).

In terms of domain architecture, EngB-type G spans 22–194 (GKPEIALVGR…SVWEWITAHM (173 aa)). Residues 30–37 (GRSNVGKS), 57–61 (GKTQT), 75–78 (DVPG), 142–145 (TKSD), and 175–177 (FSS) each bind GTP. Mg(2+)-binding residues include Ser37 and Thr59.

It belongs to the TRAFAC class TrmE-Era-EngA-EngB-Septin-like GTPase superfamily. EngB GTPase family. The cofactor is Mg(2+).

Functionally, necessary for normal cell division and for the maintenance of normal septation. The chain is Probable GTP-binding protein EngB from Leuconostoc citreum (strain KM20).